Reading from the N-terminus, the 207-residue chain is Protein GrpE (207 aa).

A disordered region spans residues 1–31 (MSEHQTPPEEDLTVANGDSAEAVSEPDVTVA).

The protein belongs to the GrpE family. Homodimer.

It localises to the cytoplasm. Functionally, participates actively in the response to hyperosmotic and heat shock by preventing the aggregation of stress-denatured proteins, in association with DnaK and GrpE. It is the nucleotide exchange factor for DnaK and may function as a thermosensor. Unfolded proteins bind initially to DnaJ; upon interaction with the DnaJ-bound protein, DnaK hydrolyzes its bound ATP, resulting in the formation of a stable complex. GrpE releases ADP from DnaK; ATP binding to DnaK triggers the release of the substrate protein, thus completing the reaction cycle. Several rounds of ATP-dependent interactions between DnaJ, DnaK and GrpE are required for fully efficient folding. The chain is Protein GrpE from Synechococcus elongatus (strain ATCC 33912 / PCC 7942 / FACHB-805) (Anacystis nidulans R2).